Reading from the N-terminus, the 475-residue chain is Ribulose bisphosphate carboxylase large chain (475 aa).

Positions methionine 1–alanine 2 are excised as a propeptide. Proline 3 carries the N-acetylproline modification. Residue lysine 14 is modified to N6,N6,N6-trimethyllysine. Substrate is bound by residues asparagine 123 and threonine 173. Lysine 175 acts as the Proton acceptor in catalysis. Lysine 177 contributes to the substrate binding site. Mg(2+) is bound by residues lysine 201, aspartate 203, and glutamate 204. N6-carboxylysine is present on lysine 201. Histidine 294 (proton acceptor) is an active-site residue. Substrate is bound by residues arginine 295, histidine 327, and serine 379.

This sequence belongs to the RuBisCO large chain family. Type I subfamily. As to quaternary structure, heterohexadecamer of 8 large chains and 8 small chains. Mg(2+) serves as cofactor.

The protein localises to the plastid. Its subcellular location is the chloroplast. The enzyme catalyses 2 (2R)-3-phosphoglycerate + 2 H(+) = D-ribulose 1,5-bisphosphate + CO2 + H2O. It carries out the reaction D-ribulose 1,5-bisphosphate + O2 = 2-phosphoglycolate + (2R)-3-phosphoglycerate + 2 H(+). In terms of biological role, ruBisCO catalyzes two reactions: the carboxylation of D-ribulose 1,5-bisphosphate, the primary event in carbon dioxide fixation, as well as the oxidative fragmentation of the pentose substrate in the photorespiration process. Both reactions occur simultaneously and in competition at the same active site. In Nephroselmis olivacea (Green alga), this protein is Ribulose bisphosphate carboxylase large chain.